The sequence spans 650 residues: Hemocyanin subunit 2 (650 aa).

O-linked (GalNAc...) serine glycosylation is found at Ser120 and Ser172. Positions 193, 197, and 225 each coordinate Cu cation. Asn309 carries an N-linked (GlcNAc...) asparagine glycan. His344, His348, and His384 together coordinate Cu cation.

This sequence belongs to the tyrosinase family. Hemocyanin subfamily. In terms of assembly, hexamer of a number of different chains, of which five have been identified. In terms of processing, contains one N-glycosylated and three O-glycosylated residues. The position of one of the O-glycosylated residues has not been determined. Post-translationally, O-linked glycan at Ser-120 may be composed of two GalNAc, three Gal, and two N-acetylneuraminic acid units for a total 1525-Da MW. Hemolymph.

It localises to the secreted. It is found in the extracellular space. Its function is as follows. Hemocyanins are copper-containing oxygen carriers occurring freely dissolved in the hemolymph of many mollusks and arthropods. In Carcinus aestuarii (Green crab), this protein is Hemocyanin subunit 2.